Here is a 280-residue protein sequence, read N- to C-terminus: tRNA pseudouridine synthase A (280 aa).

Asp55 functions as the Nucleophile in the catalytic mechanism. Tyr110 is a binding site for substrate.

This sequence belongs to the tRNA pseudouridine synthase TruA family.

The catalysed reaction is uridine(38/39/40) in tRNA = pseudouridine(38/39/40) in tRNA. In terms of biological role, formation of pseudouridine at positions 38, 39 and 40 in the anticodon stem and loop of transfer RNAs. The sequence is that of tRNA pseudouridine synthase A from Methanosphaerula palustris (strain ATCC BAA-1556 / DSM 19958 / E1-9c).